The following is a 367-amino-acid chain: C-glycoside deglycosidase alpha subunit (367 aa).

Position 146 (glutamate 146) interacts with Mg(2+). The active-site Proton acceptor is histidine 148. Mg(2+)-binding residues include aspartate 178, histidine 276, and glutamate 312.

The protein belongs to the C-glycoside deglycosidase alpha subunit family. As to quaternary structure, heterodimer composed of an alpha subunit (CarB1) and a beta subunit (CarC1). Requires Mg(2+) as cofactor.

It carries out the reaction 3''-dehydroisovitexin = 1,5-anhydro-D-erythro-hex-1-en-3-ulose + apigenin. Its activity is regulated as follows. Activity is strongly reduced in the presence of chelating agents. In terms of biological role, carbon-carbon bond-cleaving enzyme which participates in the metabolism of C-glycosides. Acts on the C6-glycosylated compound 3''-dehydroisovitexin (3''-oxo-isovitexin). Shows weak activity with 3''-dehydroisoorientin (3''-oxo-homoorientin) and 3'-dehydromangiferin (3'-oxo-mangiferin). The sequence is that of C-glycoside deglycosidase alpha subunit from Arthrobacter globiformis (strain ATCC 8010 / DSM 20124 / JCM 1332 / NBRC 12137 / NCIMB 8907 / NRRL B-2979 / 168).